The following is a 464-amino-acid chain: 3-isopropylmalate dehydratase large subunit (464 aa).

Cys-345, Cys-405, and Cys-408 together coordinate [4Fe-4S] cluster.

Belongs to the aconitase/IPM isomerase family. LeuC type 1 subfamily. In terms of assembly, heterodimer of LeuC and LeuD. It depends on [4Fe-4S] cluster as a cofactor.

It catalyses the reaction (2R,3S)-3-isopropylmalate = (2S)-2-isopropylmalate. Its pathway is amino-acid biosynthesis; L-leucine biosynthesis; L-leucine from 3-methyl-2-oxobutanoate: step 2/4. Functionally, catalyzes the isomerization between 2-isopropylmalate and 3-isopropylmalate, via the formation of 2-isopropylmaleate. This is 3-isopropylmalate dehydratase large subunit from Bacteroides thetaiotaomicron (strain ATCC 29148 / DSM 2079 / JCM 5827 / CCUG 10774 / NCTC 10582 / VPI-5482 / E50).